The sequence spans 248 residues: 4-hydroxy-tetrahydrodipicolinate reductase (248 aa).

NAD(+)-binding positions include 9–14 (GAKGRV), 77–79 (GTT), and 104–107 (APNF). H134 (proton donor/acceptor) is an active-site residue. (S)-2,3,4,5-tetrahydrodipicolinate is bound at residue H135. K138 acts as the Proton donor in catalysis. Residue 144–145 (GT) participates in (S)-2,3,4,5-tetrahydrodipicolinate binding.

The protein belongs to the DapB family.

The protein localises to the cytoplasm. The catalysed reaction is (S)-2,3,4,5-tetrahydrodipicolinate + NAD(+) + H2O = (2S,4S)-4-hydroxy-2,3,4,5-tetrahydrodipicolinate + NADH + H(+). The enzyme catalyses (S)-2,3,4,5-tetrahydrodipicolinate + NADP(+) + H2O = (2S,4S)-4-hydroxy-2,3,4,5-tetrahydrodipicolinate + NADPH + H(+). It functions in the pathway amino-acid biosynthesis; L-lysine biosynthesis via DAP pathway; (S)-tetrahydrodipicolinate from L-aspartate: step 4/4. Functionally, catalyzes the conversion of 4-hydroxy-tetrahydrodipicolinate (HTPA) to tetrahydrodipicolinate. The chain is 4-hydroxy-tetrahydrodipicolinate reductase from Corynebacterium glutamicum (strain ATCC 13032 / DSM 20300 / JCM 1318 / BCRC 11384 / CCUG 27702 / LMG 3730 / NBRC 12168 / NCIMB 10025 / NRRL B-2784 / 534).